Consider the following 358-residue polypeptide: Nicotinate-nucleotide--dimethylbenzimidazole phosphoribosyltransferase (358 aa).

The active-site Proton acceptor is glutamate 313.

This sequence belongs to the CobT family.

It carries out the reaction 5,6-dimethylbenzimidazole + nicotinate beta-D-ribonucleotide = alpha-ribazole 5'-phosphate + nicotinate + H(+). Its pathway is nucleoside biosynthesis; alpha-ribazole biosynthesis; alpha-ribazole from 5,6-dimethylbenzimidazole: step 1/2. Catalyzes the synthesis of alpha-ribazole-5'-phosphate from nicotinate mononucleotide (NAMN) and 5,6-dimethylbenzimidazole (DMB). This is Nicotinate-nucleotide--dimethylbenzimidazole phosphoribosyltransferase from Corynebacterium glutamicum (strain ATCC 13032 / DSM 20300 / JCM 1318 / BCRC 11384 / CCUG 27702 / LMG 3730 / NBRC 12168 / NCIMB 10025 / NRRL B-2784 / 534).